The primary structure comprises 160 residues: SsrA-binding protein (160 aa).

The tract at residues 136-160 is disordered; the sequence is KRDTVRERDSNRELQRAVRNKGKED.

This sequence belongs to the SmpB family.

It localises to the cytoplasm. Its function is as follows. Required for rescue of stalled ribosomes mediated by trans-translation. Binds to transfer-messenger RNA (tmRNA), required for stable association of tmRNA with ribosomes. tmRNA and SmpB together mimic tRNA shape, replacing the anticodon stem-loop with SmpB. tmRNA is encoded by the ssrA gene; the 2 termini fold to resemble tRNA(Ala) and it encodes a 'tag peptide', a short internal open reading frame. During trans-translation Ala-aminoacylated tmRNA acts like a tRNA, entering the A-site of stalled ribosomes, displacing the stalled mRNA. The ribosome then switches to translate the ORF on the tmRNA; the nascent peptide is terminated with the 'tag peptide' encoded by the tmRNA and targeted for degradation. The ribosome is freed to recommence translation, which seems to be the essential function of trans-translation. In Pseudomonas putida (strain W619), this protein is SsrA-binding protein.